A 212-amino-acid chain; its full sequence is Ribosomal RNA large subunit methyltransferase E (212 aa).

The S-adenosyl-L-methionine site is built by Gly-57, Trp-59, Asp-77, Asp-93, and Asp-122. Lys-162 acts as the Proton acceptor in catalysis.

It belongs to the class I-like SAM-binding methyltransferase superfamily. RNA methyltransferase RlmE family.

It is found in the cytoplasm. The enzyme catalyses uridine(2552) in 23S rRNA + S-adenosyl-L-methionine = 2'-O-methyluridine(2552) in 23S rRNA + S-adenosyl-L-homocysteine + H(+). Specifically methylates the uridine in position 2552 of 23S rRNA at the 2'-O position of the ribose in the fully assembled 50S ribosomal subunit. The chain is Ribosomal RNA large subunit methyltransferase E from Coxiella burnetii (strain RSA 493 / Nine Mile phase I).